The following is a 357-amino-acid chain: NADH-quinone oxidoreductase subunit H (357 aa).

A run of 8 helical transmembrane segments spans residues 26–46 (LVKI…LTLW), 92–112 (ALFV…WAVI), 127–147 (LLFV…AGWA), 164–184 (MISY…VTGS), 203–223 (GLTF…IYII), 259–279 (FFLA…LMFL), 294–314 (VPGW…FIWF), and 329–349 (LGWK…AIWM).

This sequence belongs to the complex I subunit 1 family. NDH-1 is composed of 14 different subunits. Subunits NuoA, H, J, K, L, M, N constitute the membrane sector of the complex.

The protein resides in the cell inner membrane. It carries out the reaction a quinone + NADH + 5 H(+)(in) = a quinol + NAD(+) + 4 H(+)(out). Functionally, NDH-1 shuttles electrons from NADH, via FMN and iron-sulfur (Fe-S) centers, to quinones in the respiratory chain. The immediate electron acceptor for the enzyme in this species is believed to be ubiquinone. Couples the redox reaction to proton translocation (for every two electrons transferred, four hydrogen ions are translocated across the cytoplasmic membrane), and thus conserves the redox energy in a proton gradient. This subunit may bind ubiquinone. The sequence is that of NADH-quinone oxidoreductase subunit H from Janthinobacterium sp. (strain Marseille) (Minibacterium massiliensis).